Consider the following 369-residue polypeptide: Protein RecA (369 aa).

Basic and acidic residues predominate over residues 1–10 (MARTTDDSKK). Residues 1–20 (MARTTDDSKKAAPAAGTADE) are disordered. An ATP-binding site is contributed by 82–89 (GPESSGKT). The tract at residues 350–369 (PAAAVAAPDEGDDDLGDEEV) is disordered. A compositionally biased stretch (acidic residues) spans 358-369 (DEGDDDLGDEEV).

The protein belongs to the RecA family.

The protein localises to the cytoplasm. In terms of biological role, can catalyze the hydrolysis of ATP in the presence of single-stranded DNA, the ATP-dependent uptake of single-stranded DNA by duplex DNA, and the ATP-dependent hybridization of homologous single-stranded DNAs. It interacts with LexA causing its activation and leading to its autocatalytic cleavage. The polypeptide is Protein RecA (Gloeobacter violaceus (strain ATCC 29082 / PCC 7421)).